The following is a 184-amino-acid chain: Threonylcarbamoyl-AMP synthase (184 aa).

Residues 1–184 (MNNLENIVEQ…IFTQHIFRQG (184 aa)) enclose the YrdC-like domain.

Belongs to the SUA5 family. TsaC subfamily.

The protein localises to the cytoplasm. It carries out the reaction L-threonine + hydrogencarbonate + ATP = L-threonylcarbamoyladenylate + diphosphate + H2O. Its function is as follows. Required for the formation of a threonylcarbamoyl group on adenosine at position 37 (t(6)A37) in tRNAs that read codons beginning with adenine. Catalyzes the conversion of L-threonine, HCO(3)(-)/CO(2) and ATP to give threonylcarbamoyl-AMP (TC-AMP) as the acyladenylate intermediate, with the release of diphosphate. In Actinobacillus pleuropneumoniae serotype 5b (strain L20), this protein is Threonylcarbamoyl-AMP synthase.